We begin with the raw amino-acid sequence, 719 residues long: T-cell immunomodulatory protein homolog (719 aa).

Residues Met-1–Ile-32 form the signal peptide. Residues Phe-33–Tyr-677 are Extracellular-facing. 5 N-linked (GlcNAc...) asparagine glycosylation sites follow: Asn-144, Asn-277, Asn-410, Asn-540, and Asn-659. A helical transmembrane segment spans residues Ser-678–Leu-697. Residues Asp-698 to Gly-719 are Cytoplasmic-facing.

The protein belongs to the TIP family.

The protein resides in the membrane. May protect the parasite against attack by the host immune system by immunomodulation. The sequence is that of T-cell immunomodulatory protein homolog from Plasmodium falciparum (isolate 3D7).